The following is a 546-amino-acid chain: Phosphoglucomutase (546 aa).

The active-site Phosphoserine intermediate is the Ser-135. Residues Ser-135, Asp-288, Asp-290, and Asp-292 each contribute to the Mg(2+) site.

This sequence belongs to the phosphohexose mutase family. Requires Mg(2+) as cofactor.

The enzyme catalyses alpha-D-glucose 1-phosphate = alpha-D-glucose 6-phosphate. Its pathway is glycolipid metabolism; diglucosyl-diacylglycerol biosynthesis. Its function is as follows. Catalyzes the interconversion between glucose-6-phosphate and alpha-glucose-1-phosphate. This is the first step in the biosynthesis of diglucosyl-diacylglycerol (Glc2-DAG), i.e. a glycolipid found in the membrane, which is also used as a membrane anchor for lipoteichoic acid (LTA). The polypeptide is Phosphoglucomutase (pgcA) (Staphylococcus epidermidis (strain ATCC 12228 / FDA PCI 1200)).